The chain runs to 186 residues: CoB--CoM heterodisulfide reductase iron-sulfur subunit C 2 (186 aa).

2 4Fe-4S ferredoxin-type domains span residues 26-56 (GEDI…AYRT) and 67-99 (LDDV…TEII). Positions 36, 39, 42, 46, 79, 82, 85, and 89 each coordinate [4Fe-4S] cluster.

The protein belongs to the HdrC family. In terms of assembly, the heterodisulfide reductase is composed of three subunits; HdrA, HdrB and HdrC. It depends on [4Fe-4S] cluster as a cofactor.

The protein operates within cofactor metabolism; coenzyme M-coenzyme B heterodisulfide reduction; coenzyme B and coenzyme M from coenzyme M-coenzyme B heterodisulfide: step 1/1. Part of a complex that catalyzes the reversible reduction of CoM-S-S-CoB to the thiol-coenzymes H-S-CoM (coenzyme M) and H-S-CoB (coenzyme B). The chain is CoB--CoM heterodisulfide reductase iron-sulfur subunit C 2 (hdrC2) from Methanocaldococcus jannaschii (strain ATCC 43067 / DSM 2661 / JAL-1 / JCM 10045 / NBRC 100440) (Methanococcus jannaschii).